The primary structure comprises 469 residues: Arginine biosynthesis bifunctional protein ArgJ, mitochondrial (469 aa).

Residues T199, K228, T239, E325, N464, and T469 each contribute to the substrate site. T239 (nucleophile) is an active-site residue.

Belongs to the ArgJ family. As to quaternary structure, heterodimer of an alpha and a beta chain. In terms of processing, the alpha and beta chains are autoproteolytically processed from a single precursor protein within the mitochondrion.

Its subcellular location is the mitochondrion matrix. The catalysed reaction is N(2)-acetyl-L-ornithine + L-glutamate = N-acetyl-L-glutamate + L-ornithine. It carries out the reaction L-glutamate + acetyl-CoA = N-acetyl-L-glutamate + CoA + H(+). It participates in amino-acid biosynthesis; L-arginine biosynthesis; L-ornithine and N-acetyl-L-glutamate from L-glutamate and N(2)-acetyl-L-ornithine (cyclic): step 1/1. The protein operates within amino-acid biosynthesis; L-arginine biosynthesis; N(2)-acetyl-L-ornithine from L-glutamate: step 1/4. Catalyzes two activities which are involved in the cyclic version of arginine biosynthesis: the synthesis of acetylglutamate from glutamate and acetyl-CoA, and of ornithine by transacetylation between acetylornithine and glutamate. In Neurospora crassa (strain ATCC 24698 / 74-OR23-1A / CBS 708.71 / DSM 1257 / FGSC 987), this protein is Arginine biosynthesis bifunctional protein ArgJ, mitochondrial.